Here is a 641-residue protein sequence, read N- to C-terminus: Protein TIC 62, chloroplastic (641 aa).

Residues 1 to 63 (MEGTCFLRGQ…LSLRASGPIR (63 aa)) constitute a chloroplast transit peptide. Residue Ala-64 is modified to N-acetylalanine. 84–113 (VFVAGATGKVGSRTVRELLKLGFRVRAGVR) serves as a coordination point for NADP(+). Residues 328-641 (SKRPYVPPPK…SPLPSPVTNH (314 aa)) form a disordered region. The span at 359–372 (APKEDEAPPKEKNV) shows a compositional bias: basic and acidic residues. 2 tandem repeats follow at residues 376 to 397 (PLSPYASYEDLKPPTSPIPNST) and 444 to 465 (PLSPYARYENLKPPSSPSPTAS). The segment at 376–638 (PLSPYASYED…PPTSPLPSPV (263 aa)) is 4 X 22 AA approximate repeats. The segment covering 393–402 (IPNSTTSVSP) has biased composition (low complexity). The segment covering 435–444 (KQVEEKKERP) has biased composition (basic and acidic residues). Residues 485–528 (SSTVAKTVTETAVATSVTETSVATSVPETAVATSVTETAAPATS) show a composition bias toward low complexity. Copy 3 of the repeat occupies 532-553 (PLSPYAIYADLKPPTSPTPAST). The segment covering 599–612 (AIDTSLASGDNTAQ) has biased composition (polar residues). Repeat unit 4 spans residues 617 to 638 (PLSPYTMYADMKPPTSPLPSPV). A compositionally biased stretch (pro residues) spans 630 to 641 (PTSPLPSPVTNH).

As to quaternary structure, part of the Tic complex. Interacts with TIC110 and TIC55. Interacts with LFNR1 and LFNR2. Component of high molecular weight thylakoid LFNRs-containing protein complexes containing LIR1, LFNR1, LFNR2, TIC62 and TROL proteins. Expressed in cotyledons and leaves, but not in roots.

It is found in the plastid. The protein localises to the chloroplast inner membrane. The protein resides in the chloroplast stroma. Its subcellular location is the chloroplast thylakoid. In terms of biological role, involved in protein precursor import into chloroplasts. Part of the redox regulon consisting of TIC32, TIC 55 and TIC62. Acts as a membrane anchor of LFNR1 and LFNR2. Has a NADPH-dependent dehydrogenase activity, but only after preincubation with lipids. This chain is Protein TIC 62, chloroplastic, found in Arabidopsis thaliana (Mouse-ear cress).